We begin with the raw amino-acid sequence, 194 residues long: NADH-quinone oxidoreductase subunit B (194 aa).

[4Fe-4S] cluster is bound by residues Cys73, Cys74, Cys138, and Cys168.

The protein belongs to the complex I 20 kDa subunit family. In terms of assembly, NDH-1 is composed of 14 different subunits. Subunits NuoB, C, D, E, F, and G constitute the peripheral sector of the complex. Requires [4Fe-4S] cluster as cofactor.

It is found in the cell inner membrane. The enzyme catalyses a quinone + NADH + 5 H(+)(in) = a quinol + NAD(+) + 4 H(+)(out). Functionally, NDH-1 shuttles electrons from NADH, via FMN and iron-sulfur (Fe-S) centers, to quinones in the respiratory chain. The immediate electron acceptor for the enzyme in this species is believed to be ubiquinone. Couples the redox reaction to proton translocation (for every two electrons transferred, four hydrogen ions are translocated across the cytoplasmic membrane), and thus conserves the redox energy in a proton gradient. The sequence is that of NADH-quinone oxidoreductase subunit B from Rhizobium leguminosarum bv. trifolii (strain WSM2304).